The chain runs to 91 residues: Small ribosomal subunit protein bS16 (91 aa).

This sequence belongs to the bacterial ribosomal protein bS16 family.

This Ruthia magnifica subsp. Calyptogena magnifica protein is Small ribosomal subunit protein bS16.